Reading from the N-terminus, the 102-residue chain is UPF0235 protein msl4154 (102 aa).

It belongs to the UPF0235 family.

The protein is UPF0235 protein msl4154 of Mesorhizobium japonicum (strain LMG 29417 / CECT 9101 / MAFF 303099) (Mesorhizobium loti (strain MAFF 303099)).